A 180-amino-acid chain; its full sequence is Membrane protein UL121 (180 aa).

An N-terminal signal peptide occupies residues 1 to 27; that stretch reads MWGCGWSRILVLLLLMCMALMARGTYG. Residues 143 to 163 traverse the membrane as a helical segment; that stretch reads LGLLYAVCLILSFSIVTAALW.

Belongs to the HHV-5 UL121 protein family.

It is found in the host membrane. This chain is Membrane protein UL121 (UL121), found in Human cytomegalovirus (strain Merlin) (HHV-5).